The primary structure comprises 182 residues: dTTP/UTP pyrophosphatase (182 aa).

Asp-64 acts as the Proton acceptor in catalysis.

This sequence belongs to the Maf family. YhdE subfamily. It depends on a divalent metal cation as a cofactor.

It localises to the cytoplasm. The catalysed reaction is dTTP + H2O = dTMP + diphosphate + H(+). It catalyses the reaction UTP + H2O = UMP + diphosphate + H(+). In terms of biological role, nucleoside triphosphate pyrophosphatase that hydrolyzes dTTP and UTP. May have a dual role in cell division arrest and in preventing the incorporation of modified nucleotides into cellular nucleic acids. In Thermosipho melanesiensis (strain DSM 12029 / CIP 104789 / BI429), this protein is dTTP/UTP pyrophosphatase.